Reading from the N-terminus, the 564-residue chain is Oxalyl-CoA decarboxylase (564 aa).

Residues Ile32 and Tyr118 each contribute to the substrate site. Arg158 and Lys220 together coordinate ADP. Substrate is bound at residue 261–265 (AAARS). 3 residues coordinate ADP: Arg280, Asp302, and Ile322. Residue Asn355 coordinates substrate. Thiamine diphosphate contacts are provided by residues Tyr372 and 396-398 (ANT). 403-404 (RN) provides a ligand contact to substrate. Thiamine diphosphate is bound at residue 421–423 (GVM). Asp447 provides a ligand contact to Mg(2+). 448 to 449 (SA) contacts thiamine diphosphate. Mg(2+)-binding residues include Asn474 and Gly476. Tyr478 lines the thiamine diphosphate pocket. Substrate is bound at residue 550 to 552 (SGH).

This sequence belongs to the TPP enzyme family. Homotetramer; dimer of dimers. Mg(2+) is required as a cofactor. Requires thiamine diphosphate as cofactor.

It carries out the reaction oxalyl-CoA + H(+) = formyl-CoA + CO2. Its pathway is metabolic intermediate degradation; oxalate degradation; CO(2) and formate from oxalate: step 2/2. Its function is as follows. Involved in the catabolism of oxalate and in the adapatation to low pH via the induction of the oxalate-dependent acid tolerance response (ATR). Catalyzes the decarboxylation of oxalyl-CoA to yield carbon dioxide and formyl-CoA. The sequence is that of Oxalyl-CoA decarboxylase (oxc) from Escherichia coli O157:H7.